The following is a 232-amino-acid chain: 7-cyano-7-deazaguanine synthase (232 aa).

Residue 8-18 (FSGGQDSTTCL) coordinates ATP. The Zn(2+) site is built by Cys187, Cys196, Cys199, and Cys202.

It belongs to the QueC family. Requires Zn(2+) as cofactor.

The catalysed reaction is 7-carboxy-7-deazaguanine + NH4(+) + ATP = 7-cyano-7-deazaguanine + ADP + phosphate + H2O + H(+). The protein operates within purine metabolism; 7-cyano-7-deazaguanine biosynthesis. Catalyzes the ATP-dependent conversion of 7-carboxy-7-deazaguanine (CDG) to 7-cyano-7-deazaguanine (preQ(0)). This chain is 7-cyano-7-deazaguanine synthase, found in Photobacterium profundum (strain SS9).